A 367-amino-acid polypeptide reads, in one-letter code: Chorismate synthase (367 aa).

NADP(+) contacts are provided by Arg48 and Arg54. FMN is bound by residues 125–127 (RSS), 238–239 (NA), Gly278, 293–297 (KPTSS), and Arg319.

This sequence belongs to the chorismate synthase family. Homotetramer. It depends on FMNH2 as a cofactor.

It catalyses the reaction 5-O-(1-carboxyvinyl)-3-phosphoshikimate = chorismate + phosphate. It participates in metabolic intermediate biosynthesis; chorismate biosynthesis; chorismate from D-erythrose 4-phosphate and phosphoenolpyruvate: step 7/7. Functionally, catalyzes the anti-1,4-elimination of the C-3 phosphate and the C-6 proR hydrogen from 5-enolpyruvylshikimate-3-phosphate (EPSP) to yield chorismate, which is the branch point compound that serves as the starting substrate for the three terminal pathways of aromatic amino acid biosynthesis. This reaction introduces a second double bond into the aromatic ring system. The polypeptide is Chorismate synthase (Stenotrophomonas maltophilia (strain R551-3)).